Reading from the N-terminus, the 274-residue chain is Protein-export membrane protein SecF (274 aa).

The next 6 membrane-spanning stretches (helical) occupy residues 14–34 (LLILTMVFAVICAGSTLALGV), 121–141 (SVKVAVPLALVAVSIVVFAIF), 143–163 (KPLLSAAVLGALALDLVDALG), 175–197 (ASFAGLLMIIGYAVDSNILLSMY), 217–237 (TGITMVATTTAAACALFLLSM), and 247–267 (VVIFGLIADVLNTWIFNAWVI).

Belongs to the SecD/SecF family. SecF subfamily. Part of the protein translocation apparatus. Forms a complex with SecD.

Its subcellular location is the cell membrane. Involved in protein export. This Methanopyrus kandleri (strain AV19 / DSM 6324 / JCM 9639 / NBRC 100938) protein is Protein-export membrane protein SecF.